The chain runs to 41 residues: Hemoglobin subunit beta (41 aa).

Positions 1–41 constitute a Globin domain; the sequence is LGNVLVCVLAHHFGKEFTPQVQAAYQKVVAGVANALAHKYH. N6-acetyllysine is present on K39.

It belongs to the globin family. As to quaternary structure, heterotetramer of two alpha chains and two beta chains. As to expression, red blood cells.

In terms of biological role, involved in oxygen transport from the lung to the various peripheral tissues. This Colobus guereza (Mantled guereza) protein is Hemoglobin subunit beta (HBB).